The sequence spans 352 residues: Tropomodulin-3 (352 aa).

The residue at position 25 (serine 25) is a Phosphoserine.

This sequence belongs to the tropomodulin family. As to quaternary structure, binds to the N-terminus of tropomyosin and to actin. Interacts with FLII. Ubiquitous.

The protein resides in the cytoplasm. It localises to the cytoskeleton. Its function is as follows. Blocks the elongation and depolymerization of the actin filaments at the pointed end. The Tmod/TM complex contributes to the formation of the short actin protofilament, which in turn defines the geometry of the membrane skeleton. This is Tropomodulin-3 (TMOD3) from Homo sapiens (Human).